The primary structure comprises 212 residues: Large ribosomal subunit protein uL3 (212 aa).

Positions 139–153 (LSHRVTGSIGQNQTP) are enriched in polar residues. The interval 139–161 (LSHRVTGSIGQNQTPGKVFKGKK) is disordered. Position 151 is an N5-methylglutamine (Gln151).

It belongs to the universal ribosomal protein uL3 family. In terms of assembly, part of the 50S ribosomal subunit. Forms a cluster with proteins L14 and L19. Methylated by PrmB.

Its function is as follows. One of the primary rRNA binding proteins, it binds directly near the 3'-end of the 23S rRNA, where it nucleates assembly of the 50S subunit. This chain is Large ribosomal subunit protein uL3, found in Baumannia cicadellinicola subsp. Homalodisca coagulata.